The primary structure comprises 365 residues: tRNA-specific 2-thiouridylase MnmA (365 aa).

ATP contacts are provided by residues 12–19 (AMSGGVDS) and Met-38. The active-site Nucleophile is the Cys-108. Cys-108 and Cys-206 are joined by a disulfide. Gly-132 serves as a coordination point for ATP. The tract at residues 156–158 (KDQ) is interaction with tRNA. The Cysteine persulfide intermediate role is filled by Cys-206. An interaction with tRNA region spans residues 312–313 (RY).

The protein belongs to the MnmA/TRMU family.

It is found in the cytoplasm. It carries out the reaction S-sulfanyl-L-cysteinyl-[protein] + uridine(34) in tRNA + AH2 + ATP = 2-thiouridine(34) in tRNA + L-cysteinyl-[protein] + A + AMP + diphosphate + H(+). Its function is as follows. Catalyzes the 2-thiolation of uridine at the wobble position (U34) of tRNA, leading to the formation of s(2)U34. The sequence is that of tRNA-specific 2-thiouridylase MnmA from Carboxydothermus hydrogenoformans (strain ATCC BAA-161 / DSM 6008 / Z-2901).